The chain runs to 518 residues: MKKLKINYLFIGILALLLAVALWPSIPWFGKADNRIAAIQARGELRVSTINTPLTYNEINGKPFGLDYELAKQFADYLGVKLKVTVRQNISQLFDDLDNGNADLLAAGLVYNSERVKNYQPGPTYYSVSQQLVYKVGQYRPRTLGNLTAEQLTVAPGHVVVNDLQTLKETKFPELSWKVDDKKGSAELMEDVIEGKLDYTIADSVAISLFQRVHPELAVALDITDEQPVTWFSPLDGDNTLSAALLDFFNEMNEDGTLARIEEKYLGHGDDFDYVDTRTFLRAVDAVLPQLKPLFEKYAEEIDWRLLAAIAYQESHWDAQATSPTGVRGMMMLTKNTAQSLGITDRTDAEQSISGGVRYLQDMMSKVPESVPENERIWFALAAYNMGYAHMLDARALTAKTKGNPDSWADVKQRLPLLSQKPYYSKLTYGYARGHEAYAYVENIRKYQISLVGYLQEKEKQATEAAMQLAQDYPAVSPTELGKEKFPFLSFLSQSSSNYLTHSPSLLFSRKGSEEKQN.

The first 21 residues, 1-21 (MKKLKINYLFIGILALLLAVA), serve as a signal peptide directing secretion. The segment at 22-269 (LWPSIPWFGK…RIEEKYLGHG (248 aa)) is non-LT domain. The interval 270–518 (DDFDYVDTRT…SRKGSEEKQN (249 aa)) is LT domain. Residue E314 is part of the active site.

The protein in the N-terminal section; belongs to the bacterial solute-binding protein 3 family. It in the C-terminal section; belongs to the transglycosylase Slt family.

The protein resides in the cell outer membrane. It carries out the reaction Exolytic cleavage of the (1-&gt;4)-beta-glycosidic linkage between N-acetylmuramic acid (MurNAc) and N-acetylglucosamine (GlcNAc) residues in peptidoglycan, from either the reducing or the non-reducing ends of the peptidoglycan chains, with concomitant formation of a 1,6-anhydrobond in the MurNAc residue.. Murein-degrading enzyme that degrades murein glycan strands and insoluble, high-molecular weight murein sacculi, with the concomitant formation of a 1,6-anhydromuramoyl product. Lytic transglycosylases (LTs) play an integral role in the metabolism of the peptidoglycan (PG) sacculus. Their lytic action creates space within the PG sacculus to allow for its expansion as well as for the insertion of various structures such as secretion systems and flagella. In Escherichia coli (strain SMS-3-5 / SECEC), this protein is Membrane-bound lytic murein transglycosylase F.